The following is a 188-amino-acid chain: MLQLHPSDIKDVVLNGGVIAYPTEAVYGLGCDPDNDTAIQKLLAVKQRPWQKGLILVASEFSQLLAYVDESQLTDEQLELAFSKWPGPFTFVMPIKPHVSRYLCGEFDSIAVRVSAHEGVRALCQALGKPLVSTSANLAGEDPALSGDEILNVFEGKIDALVLGQLGEQRQPSTIIDARSGKILRNGQ.

A YrdC-like domain is found at 3–188; the sequence is QLHPSDIKDV…RSGKILRNGQ (186 aa).

The protein belongs to the SUA5 family. TsaC subfamily.

It localises to the cytoplasm. The catalysed reaction is L-threonine + hydrogencarbonate + ATP = L-threonylcarbamoyladenylate + diphosphate + H2O. Functionally, required for the formation of a threonylcarbamoyl group on adenosine at position 37 (t(6)A37) in tRNAs that read codons beginning with adenine. Catalyzes the conversion of L-threonine, HCO(3)(-)/CO(2) and ATP to give threonylcarbamoyl-AMP (TC-AMP) as the acyladenylate intermediate, with the release of diphosphate. The sequence is that of Threonylcarbamoyl-AMP synthase from Shewanella oneidensis (strain ATCC 700550 / JCM 31522 / CIP 106686 / LMG 19005 / NCIMB 14063 / MR-1).